A 205-amino-acid polypeptide reads, in one-letter code: Peptidyl-prolyl cis-trans isomerase B (205 aa).

An N-terminal signal peptide occupies residues 1–20 (MKFSGLWCWLLLFLSVNVIA). A PPIase cyclophilin-type domain is found at 39 to 198 (FFDIEHGEEK…EAVKIAKCGE (160 aa)).

The protein belongs to the cyclophilin-type PPIase family. PPIase B subfamily.

The protein localises to the secreted. The enzyme catalyses [protein]-peptidylproline (omega=180) = [protein]-peptidylproline (omega=0). Its activity is regulated as follows. Cyclosporin A (CsA) inhibits CYPB. Its function is as follows. PPIases accelerate the folding of proteins. It catalyzes the cis-trans isomerization of proline imidic peptide bonds in oligopeptides. This is Peptidyl-prolyl cis-trans isomerase B (CPR2) from Saccharomyces cerevisiae (strain ATCC 204508 / S288c) (Baker's yeast).